Consider the following 189-residue polypeptide: Ras-like protein 1 (189 aa).

Residue 10–17 (GAGGVGKS) participates in GTP binding. The Effector region motif lies at 32–40 (YDPTIEDSY). GTP-binding positions include 57 to 61 (DTAGQ) and 116 to 119 (NKCD). Cys186 is subject to Cysteine methyl ester. Cys186 carries S-geranylgeranyl cysteine lipidation. A propeptide spans 187 to 189 (KML) (removed in mature form).

Belongs to the small GTPase superfamily. Ras family.

The protein localises to the cell membrane. The enzyme catalyses GTP + H2O = GDP + phosphate + H(+). Its activity is regulated as follows. Alternates between an inactive form bound to GDP and an active form bound to GTP. Activated by a guanine nucleotide-exchange factor (GEF) and inactivated by a GTPase-activating protein (GAP). In terms of biological role, ras proteins bind GDP/GTP and possess intrinsic GTPase activity. Plays a role in eye development by regulating cell growth, survival of postmitotic ommatidial cells and differentiation of photoreceptor cells. During larval development, mediates Ptth/tor signaling leading to the production of ecdysone, a hormone required for the initiation of metamorphosis. The polypeptide is Ras-like protein 1 (Drosophila virilis (Fruit fly)).